Here is a 235-residue protein sequence, read N- to C-terminus: Peptidase E (235 aa).

Catalysis depends on charge relay system residues Ser-122, Asp-137, and His-159.

This sequence belongs to the peptidase S51 family.

The protein resides in the cytoplasm. The enzyme catalyses Dipeptidase E catalyzes the hydrolysis of dipeptides Asp-|-Xaa. It does not act on peptides with N-terminal Glu, Asn or Gln, nor does it cleave isoaspartyl peptides.. In terms of biological role, hydrolyzes dipeptides containing N-terminal aspartate residues. May play a role in allowing the cell to use peptide aspartate to spare carbon otherwise required for the synthesis of the aspartate family of amino acids. The sequence is that of Peptidase E from Shewanella denitrificans (strain OS217 / ATCC BAA-1090 / DSM 15013).